The sequence spans 60 residues: Large ribosomal subunit protein uL30 (60 aa).

Belongs to the universal ribosomal protein uL30 family. Part of the 50S ribosomal subunit.

The polypeptide is Large ribosomal subunit protein uL30 (Flavobacterium psychrophilum (strain ATCC 49511 / DSM 21280 / CIP 103535 / JIP02/86)).